Reading from the N-terminus, the 305-residue chain is Translation initiation factor eIF2B subunit alpha (305 aa).

Lys35 carries the N6-acetyllysine modification.

Belongs to the eIF-2B alpha/beta/delta subunits family. In terms of assembly, component of the translation initiation factor 2B (eIF2B) complex which is a heterodecamer of two sets of five different subunits: alpha, beta, gamma, delta and epsilon. Subunits alpha, beta and delta comprise a regulatory subcomplex and subunits epsilon and gamma comprise a catalytic subcomplex. Within the complex, the hexameric regulatory complex resides at the center, with the two heterodimeric catalytic subcomplexes bound on opposite sides.

It localises to the cytoplasm. The protein localises to the cytosol. Activated by the chemical integrated stress response (ISR) inhibitor ISRIB which stimulates guanine nucleotide exchange factor activity for both phosphorylated and unphosphorylated eIF2. Its function is as follows. Acts as a component of the translation initiation factor 2B (eIF2B) complex, which catalyzes the exchange of GDP for GTP on eukaryotic initiation factor 2 (eIF2) gamma subunit. Its guanine nucleotide exchange factor activity is repressed when bound to eIF2 complex phosphorylated on the alpha subunit, thereby limiting the amount of methionyl-initiator methionine tRNA available to the ribosome and consequently global translation is repressed. This is Translation initiation factor eIF2B subunit alpha (Eif2b1) from Mus musculus (Mouse).